The primary structure comprises 288 residues: Bifunctional protein FolD (288 aa).

NADP(+) is bound by residues 166-168 (GRS), Ser-191, and Ile-232.

This sequence belongs to the tetrahydrofolate dehydrogenase/cyclohydrolase family. As to quaternary structure, homodimer.

It catalyses the reaction (6R)-5,10-methylene-5,6,7,8-tetrahydrofolate + NADP(+) = (6R)-5,10-methenyltetrahydrofolate + NADPH. The enzyme catalyses (6R)-5,10-methenyltetrahydrofolate + H2O = (6R)-10-formyltetrahydrofolate + H(+). Its pathway is one-carbon metabolism; tetrahydrofolate interconversion. Its function is as follows. Catalyzes the oxidation of 5,10-methylenetetrahydrofolate to 5,10-methenyltetrahydrofolate and then the hydrolysis of 5,10-methenyltetrahydrofolate to 10-formyltetrahydrofolate. This chain is Bifunctional protein FolD, found in Rickettsia rickettsii (strain Iowa).